The sequence spans 481 residues: Glutamate--tRNA ligase (481 aa).

The 'HIGH' region motif lies at 9–19; that stretch reads PSPTGNLHIGT. A 'KMSKS' region motif is present at residues 247–251; the sequence is KLSKR. Residue K250 participates in ATP binding.

The protein belongs to the class-I aminoacyl-tRNA synthetase family. Glutamate--tRNA ligase type 1 subfamily. As to quaternary structure, monomer.

The protein localises to the cytoplasm. The catalysed reaction is tRNA(Glu) + L-glutamate + ATP = L-glutamyl-tRNA(Glu) + AMP + diphosphate. Catalyzes the attachment of glutamate to tRNA(Glu) in a two-step reaction: glutamate is first activated by ATP to form Glu-AMP and then transferred to the acceptor end of tRNA(Glu). The polypeptide is Glutamate--tRNA ligase (Nostoc punctiforme (strain ATCC 29133 / PCC 73102)).